The chain runs to 303 residues: Oxygen-dependent coproporphyrinogen-III oxidase (303 aa).

Serine 93 is a binding site for substrate. A divalent metal cation is bound by residues histidine 97 and histidine 107. Histidine 107 serves as the catalytic Proton donor. 109-111 (NIR) is a binding site for substrate. Positions 146 and 176 each coordinate a divalent metal cation. The important for dimerization stretch occupies residues 241-276 (YVEFNLLLDRGTLFGIQSNGRIESILSSMPPLVKWE).

Belongs to the aerobic coproporphyrinogen-III oxidase family. As to quaternary structure, homodimer. A divalent metal cation is required as a cofactor.

It is found in the cytoplasm. It carries out the reaction coproporphyrinogen III + O2 + 2 H(+) = protoporphyrinogen IX + 2 CO2 + 2 H2O. Its pathway is porphyrin-containing compound metabolism; protoporphyrin-IX biosynthesis; protoporphyrinogen-IX from coproporphyrinogen-III (O2 route): step 1/1. Its function is as follows. Involved in the heme biosynthesis. Catalyzes the aerobic oxidative decarboxylation of propionate groups of rings A and B of coproporphyrinogen-III to yield the vinyl groups in protoporphyrinogen-IX. In Wigglesworthia glossinidia brevipalpis, this protein is Oxygen-dependent coproporphyrinogen-III oxidase.